A 361-amino-acid chain; its full sequence is Velvet complex subunit B (361 aa).

Residues 1–336 form the Velvet domain; the sequence is MIVRTEDQKL…GNQGQKLPLR (336 aa). 2 disordered regions span residues 42–222 and 327–361; these read PSST…NNIP and GNQG…EDDS. 2 stretches are compositionally biased toward low complexity: residues 57–74 and 93–107; these read PSAS…SRPP and PPSS…SQSQ. Polar residues predominate over residues 108–127; the sequence is DNLTPSSPYPPHSNSEQPQT. Pro residues predominate over residues 130 to 147; the sequence is YPPPPPIDRAAPFPPPVL. 3 stretches are compositionally biased toward polar residues: residues 149–168, 181–196, and 212–222; these read SIQS…NNDD, GYTN…YGSG, and SGNATPQNNIP. Positions 335–349 are enriched in basic residues; that stretch reads LRNRHGTGSKRRRRN.

Belongs to the velvet family. VelB subfamily. As to quaternary structure, component of the heterotrimeric velvet complex composed of laeA, veA and velB; VeA acting as a bridging protein between laeA and velB. Forms a heterodimeric complex with vosA; the formation of the velB-vosA complex is light-dependent.

Its subcellular location is the nucleus. The protein resides in the cytoplasm. In terms of biological role, component of the velvet transcription factor complex that controls sexual/asexual developmental ratio in response to light, promoting sexual development in the darkness while stimulating asexual sporulation under illumination. The velvet complex acts as a global regulator for secondary metabolite gene expression. Component of the velB-VosA heterodimeric complex that plays a dual role in activating genes associated with spore maturation and repressing certain development-associated genes. The velB-VosA complex binds DNA through the DNA-binding domain of vosA that recognizes an 11-nucleotide consensus sequence 5'-CTGGCCGCGGC-3' consisting of two motifs in the promoters of key developmental regulatory genes. In Coprinopsis cinerea (strain Okayama-7 / 130 / ATCC MYA-4618 / FGSC 9003) (Inky cap fungus), this protein is Velvet complex subunit B.